We begin with the raw amino-acid sequence, 142 residues long: ATP synthase epsilon chain (142 aa).

This sequence belongs to the ATPase epsilon chain family. F-type ATPases have 2 components, CF(1) - the catalytic core - and CF(0) - the membrane proton channel. CF(1) has five subunits: alpha(3), beta(3), gamma(1), delta(1), epsilon(1). CF(0) has three main subunits: a, b and c.

It localises to the cell inner membrane. Functionally, produces ATP from ADP in the presence of a proton gradient across the membrane. This is ATP synthase epsilon chain from Shewanella piezotolerans (strain WP3 / JCM 13877).